The chain runs to 325 residues: Mitochondrial citrate transporter C (325 aa).

Solcar repeat units lie at residues 15-105, 117-208, and 221-310; these read ASPA…YKQM, KATF…LKAF, and LPSY…LKGK. 6 consecutive transmembrane segments (helical) span residues 21 to 41, 82 to 102, 121 to 141, 187 to 207, 221 to 241, and 282 to 303; these read LIAG…LDTI, GAVL…YESY, LAGL…MEVV, TALR…ELKA, LPSY…PFSN, and FYKG…TFTV.

Belongs to the mitochondrial carrier (TC 2.A.29) family.

Its subcellular location is the mitochondrion inner membrane. Mitochondrial transporter that does not mediate citrate export from mitochondria to cytoplasm. Its exact function has still to be determined. The polypeptide is Mitochondrial citrate transporter C (Aspergillus niger (strain ATCC 1015 / CBS 113.46 / FGSC A1144 / LSHB Ac4 / NCTC 3858a / NRRL 328 / USDA 3528.7)).